The sequence spans 458 residues: MGKEKTHVNVVVIGHVDSGKSTTTGHLIYKCGGIDKRTIEKFEKEAAELGKGSFKYAWVLDKLKAERERGITIDIALWKFETPKYHVTVIDAPGHRDFIKNMITGTSQADCAILIIAGGTGEFEAGISKDGQTREHALLAYTLGVKQLIVAVNKMDSVKWDKNRFEEIIKETSNFVKKVGYNPKTVPFVPISGWNGDNMIEPSTNCPWYKGWEKETKSGKVTGKTLLEAIDAIEPPTRPTDKPLRLPLQDVYKIGGIGTVPVGRVETGIIKAGMVVTFAPAGVTTEVKSVEMHHEQLAEGVPGDNVGFNVKNVSVKEIRRGNVCGDSKNDPPKGCDSFNAQVIVLNHPGQISAGYSPVLDCHTAHIACKFDTLVEKIDRRTGKKLEENPKFVKSGDAAIVKMVPTKPMCVEAFTDYPPLGRFAVRDMRQTVAVGVIKSVEKSDKAGKVTKAAQKAAKK.

A N,N,N-trimethylglycine modification is found at Gly-2. Lys-3 bears the N6,N6-dimethyllysine; alternate mark. Position 3 is an N6-methyllysine; alternate (Lys-3). In terms of domain architecture, tr-type G spans 5–240 (KTHVNVVVIG…DAIEPPTRPT (236 aa)). Residues 14–21 (GHVDSGKS) are G1. 14 to 21 (GHVDSGKS) provides a ligand contact to GTP. Lys-30 carries the N6-methyllysine modification. The tract at residues 70–74 (GITID) is G2. Residue Lys-79 is modified to N6,N6,N6-trimethyllysine. The tract at residues 91 to 94 (DAPG) is G3. GTP-binding positions include 91–95 (DAPGH) and 153–156 (NKMD). Residues 153-156 (NKMD) form a G4 region. A G5 region spans residues 192-194 (SGW). Position 316 is an N6,N6-dimethyllysine; alternate (Lys-316). The residue at position 316 (Lys-316) is an N6-methyllysine; alternate. Lys-390 is subject to N6-methyllysine.

Belongs to the TRAFAC class translation factor GTPase superfamily. Classic translation factor GTPase family. EF-Tu/EF-1A subfamily.

It is found in the cytoplasm. Its function is as follows. This protein promotes the GTP-dependent binding of aminoacyl-tRNA to the A-site of ribosomes during protein biosynthesis. This Candida albicans (strain SC5314 / ATCC MYA-2876) (Yeast) protein is Elongation factor 1-alpha 1 (TEF1).